The chain runs to 147 residues: Basic phospholipase A2 beta-bungarotoxin A1 chain (147 aa).

An N-terminal signal peptide occupies residues 1–19 (MYPAHLLILSAVCVSLLGA). A propeptide spanning residues 20–27 (ANIPPHPL) is cleaved from the precursor. 6 disulfides stabilise this stretch: C54/C146, C56/C72, C71/C127, C78/C120, C88/C113, and C106/C118. 3 residues coordinate Ca(2+): Y55, G57, and G59. H75 is an active-site residue. A Ca(2+)-binding site is contributed by D76. D121 is a catalytic residue.

The protein belongs to the phospholipase A2 family. Group I subfamily. D49 sub-subfamily. Heterodimer; disulfide-linked. The A chains have phospholipase A2 activity and the B chains show homology with the basic protease inhibitors. Requires Ca(2+) as cofactor. Expressed by the venom gland.

The protein resides in the secreted. The enzyme catalyses a 1,2-diacyl-sn-glycero-3-phosphocholine + H2O = a 1-acyl-sn-glycero-3-phosphocholine + a fatty acid + H(+). Its function is as follows. Snake venom phospholipase A2 (PLA2) that inhibits neuromuscular transmission by blocking acetylcholine release from the nerve termini. PLA2 catalyzes the calcium-dependent hydrolysis of the 2-acyl groups in 3-sn-phosphoglycerides. The sequence is that of Basic phospholipase A2 beta-bungarotoxin A1 chain from Bungarus caeruleus (Indian krait).